Consider the following 364-residue polypeptide: 3-dehydroquinate synthase (364 aa).

NAD(+)-binding positions include 71–76 (DGEQYK), 105–109 (GVIGD), 129–130 (TT), Lys142, Lys151, and 169–172 (CLKT). Positions 184, 247, and 264 each coordinate Zn(2+).

This sequence belongs to the sugar phosphate cyclases superfamily. Dehydroquinate synthase family. It depends on Co(2+) as a cofactor. Requires Zn(2+) as cofactor. The cofactor is NAD(+).

Its subcellular location is the cytoplasm. The catalysed reaction is 7-phospho-2-dehydro-3-deoxy-D-arabino-heptonate = 3-dehydroquinate + phosphate. It participates in metabolic intermediate biosynthesis; chorismate biosynthesis; chorismate from D-erythrose 4-phosphate and phosphoenolpyruvate: step 2/7. Catalyzes the conversion of 3-deoxy-D-arabino-heptulosonate 7-phosphate (DAHP) to dehydroquinate (DHQ). The protein is 3-dehydroquinate synthase of Klebsiella pneumoniae (strain 342).